A 448-amino-acid polypeptide reads, in one-letter code: Probable glycine dehydrogenase (decarboxylating) subunit 1 (448 aa).

It belongs to the GcvP family. N-terminal subunit subfamily. In terms of assembly, the glycine cleavage system is composed of four proteins: P, T, L and H. In this organism, the P 'protein' is a heterodimer of two subunits.

The catalysed reaction is N(6)-[(R)-lipoyl]-L-lysyl-[glycine-cleavage complex H protein] + glycine + H(+) = N(6)-[(R)-S(8)-aminomethyldihydrolipoyl]-L-lysyl-[glycine-cleavage complex H protein] + CO2. The glycine cleavage system catalyzes the degradation of glycine. The P protein binds the alpha-amino group of glycine through its pyridoxal phosphate cofactor; CO(2) is released and the remaining methylamine moiety is then transferred to the lipoamide cofactor of the H protein. The polypeptide is Probable glycine dehydrogenase (decarboxylating) subunit 1 (Listeria monocytogenes serotype 4b (strain CLIP80459)).